A 248-amino-acid chain; its full sequence is 23S rRNA (guanosine-2'-O-)-methyltransferase RlmB (248 aa).

S-adenosyl-L-methionine-binding residues include Gly198, Leu218, and Leu227.

This sequence belongs to the class IV-like SAM-binding methyltransferase superfamily. RNA methyltransferase TrmH family. RlmB subfamily.

It is found in the cytoplasm. It catalyses the reaction guanosine(2251) in 23S rRNA + S-adenosyl-L-methionine = 2'-O-methylguanosine(2251) in 23S rRNA + S-adenosyl-L-homocysteine + H(+). In terms of biological role, specifically methylates the ribose of guanosine 2251 in 23S rRNA. The sequence is that of 23S rRNA (guanosine-2'-O-)-methyltransferase RlmB from Pseudomonas putida (strain ATCC 47054 / DSM 6125 / CFBP 8728 / NCIMB 11950 / KT2440).